A 530-amino-acid polypeptide reads, in one-letter code: White collar 2 protein (530 aa).

7 repeat units span residues 9 to 12 (GSSM), 21 to 24 (GSGM), 25 to 28 (GSGM), 29 to 32 (GSGM), 33 to 36 (GTGM), 37 to 40 (GTGM), and 41 to 44 (GTGM). Positions 9 to 44 (GSSMYGFGAMGMGSGMGSGMGSGMGTGMGTGMGTGM) are 7 X 4 AA repeats of G-[SAT]-G-M. Residues 134–158 (IATPTTTTSGPSGGPSSGGGSTLTE) are disordered. Over residues 144–154 (PSGGPSSGGGS) the composition is skewed to gly residues. The region spanning 162 to 232 (RRNWPAKVVE…AELNEAIATG (71 aa)) is the PAS domain. The interval 315–343 (REEQEEQEESHRTWRMSQEGRSDVTPSDD) is disordered. A GATA-type zinc finger spans residues 468–493 (CTDCGTLDSPEWRKGPSGPKTLCNAC). Positions 504-530 (KNANNNNNGGGIGGHNDIHTPMGDHMG) are disordered.

Heterodimer of wc-1 and wc-2 (Potential). Binds to DNA.

The protein resides in the nucleus. In terms of biological role, may function as a transcription factor involved in light regulation. Binds and affects blue light regulation of the al-3 gene. Wc-1 and wc-2 interact via homologous PAS domains, bind to promoters of light regulated genes such as frq, and activate transcription. May bind directly to frq. This is White collar 2 protein (wc-2) from Neurospora crassa (strain ATCC 24698 / 74-OR23-1A / CBS 708.71 / DSM 1257 / FGSC 987).